Reading from the N-terminus, the 84-residue chain is Polcalcin Nic t 1 (84 aa).

2 consecutive EF-hand domains span residues 6–40 (QDIA…MLGS) and 41–76 (VTSE…NRGL). Ca(2+) contacts are provided by aspartate 19, asparagine 21, aspartate 23, lysine 25, glutamate 30, aspartate 54, aspartate 56, aspartate 58, and glutamate 65.

This Nicotiana tabacum (Common tobacco) protein is Polcalcin Nic t 1 (Nict1).